Reading from the N-terminus, the 314-residue chain is Protoheme IX farnesyltransferase (314 aa).

The next 8 membrane-spanning stretches (helical) occupy residues 31 to 51, 52 to 72, 119 to 139, 152 to 172, 179 to 199, 225 to 245, 247 to 267, and 284 to 304; these read VMSL…GHFH, PVLA…SGAL, ILVN…YVVI, IVIG…AVTG, LLLF…LALF, ILLY…LGYF, AVYG…AINV, and FAFS…EVVF.

This sequence belongs to the UbiA prenyltransferase family. Protoheme IX farnesyltransferase subfamily.

It is found in the cell inner membrane. The enzyme catalyses heme b + (2E,6E)-farnesyl diphosphate + H2O = Fe(II)-heme o + diphosphate. It functions in the pathway porphyrin-containing compound metabolism; heme O biosynthesis; heme O from protoheme: step 1/1. Functionally, converts heme B (protoheme IX) to heme O by substitution of the vinyl group on carbon 2 of heme B porphyrin ring with a hydroxyethyl farnesyl side group. The protein is Protoheme IX farnesyltransferase of Bradyrhizobium diazoefficiens (strain JCM 10833 / BCRC 13528 / IAM 13628 / NBRC 14792 / USDA 110).